A 236-amino-acid polypeptide reads, in one-letter code: Sugar fermentation stimulation protein homolog (236 aa).

Belongs to the SfsA family.

This is Sugar fermentation stimulation protein homolog from Proteus mirabilis (strain HI4320).